The following is a 550-amino-acid chain: ATP-dependent RNA helicase MSS116, mitochondrial (550 aa).

Residues 1-11 (MPPPPKRKWPN) show a composition bias toward basic residues. A mitochondrion-targeting transit peptide spans 1–41 (MPPPPKRKWPNRPRGGGGANGSASGTPTTPRSTVAQQPKRP). The segment at 1 to 51 (MPPPPKRKWPNRPRGGGGANGSASGTPTTPRSTVAQQPKRPKVEDAAPAAE) is disordered. The Q motif motif lies at 71-99 (FSELSSVLDKSLLDGLDKMGFEFMSPVQQ). One can recognise a Helicase ATP-binding domain in the interval 103 to 285 (TELPSLSSDC…KIVLFPGFTH (183 aa)). 116-123 (AKTGTGKT) serves as a coordination point for ATP. A DEAD box motif is present at residues 230-233 (DEAD). The Helicase C-terminal domain maps to 316-472 (ALSALIQEEH…KVPEQEAAIT (157 aa)).

This sequence belongs to the DEAD box helicase family. DDX18/HAS1 subfamily.

It localises to the mitochondrion matrix. It carries out the reaction ATP + H2O = ADP + phosphate + H(+). Functionally, ATP-dependent RNA helicase required for mitochondrial splicing of group I and II introns. Also required for efficient mitochondrial translation. The sequence is that of ATP-dependent RNA helicase MSS116, mitochondrial (MSS116) from Phaeosphaeria nodorum (strain SN15 / ATCC MYA-4574 / FGSC 10173) (Glume blotch fungus).